Reading from the N-terminus, the 274-residue chain is Large ribosomal subunit protein uL2 (274 aa).

The segment at 224–254 is disordered; that stretch reads AMNPVDHPHGGGEGRTGEGQAPVSPWNTLTK. Residues 229 to 239 are compositionally biased toward basic and acidic residues; sequence DHPHGGGEGRT.

The protein belongs to the universal ribosomal protein uL2 family. Part of the 50S ribosomal subunit. Forms a bridge to the 30S subunit in the 70S ribosome.

In terms of biological role, one of the primary rRNA binding proteins. Required for association of the 30S and 50S subunits to form the 70S ribosome, for tRNA binding and peptide bond formation. It has been suggested to have peptidyltransferase activity; this is somewhat controversial. Makes several contacts with the 16S rRNA in the 70S ribosome. The sequence is that of Large ribosomal subunit protein uL2 from Leptothrix cholodnii (strain ATCC 51168 / LMG 8142 / SP-6) (Leptothrix discophora (strain SP-6)).